A 306-amino-acid polypeptide reads, in one-letter code: D-alanine--D-alanine ligase (306 aa).

An ATP-grasp domain is found at 101 to 303 (KLVWQALGLP…FSQLVARILM (203 aa)). An ATP-binding site is contributed by 134 to 189 (VAKLGLPLIVKPSHEGSSVGMSKVDHASELQKALVEAFQHDSDVLIEKWLSGPEFT). D257, E270, and N272 together coordinate Mg(2+).

It belongs to the D-alanine--D-alanine ligase family. The cofactor is Mg(2+). Mn(2+) serves as cofactor.

The protein resides in the cytoplasm. The enzyme catalyses 2 D-alanine + ATP = D-alanyl-D-alanine + ADP + phosphate + H(+). It functions in the pathway cell wall biogenesis; peptidoglycan biosynthesis. Cell wall formation. The protein is D-alanine--D-alanine ligase of Yersinia pseudotuberculosis serotype O:1b (strain IP 31758).